The following is a 579-amino-acid chain: ATP-dependent lipid A-core flippase (579 aa).

The next 5 membrane-spanning stretches (helical) occupy residues 24-44 (FALS…LPAL), 63-83 (WVPL…FIST), 150-170 (VLGL…IVFA), 251-271 (VIQF…AGQA), and 275-295 (TTTV…FAPL). Residues 25–307 (ALSIVGLILT…LTAVNDQLQR (283 aa)) form the ABC transmembrane type-1 domain. The ABC transporter domain occupies 339–575 (LAFRDVGLTY…QGRYAQLHAL (237 aa)). 373 to 380 (GASGSGKT) is an ATP binding site.

The protein belongs to the ABC transporter superfamily. Lipid exporter (TC 3.A.1.106) family. In terms of assembly, homodimer.

Its subcellular location is the cell inner membrane. The enzyme catalyses ATP + H2O + lipid A-core oligosaccharideSide 1 = ADP + phosphate + lipid A-core oligosaccharideSide 2.. Its function is as follows. Involved in lipopolysaccharide (LPS) biosynthesis. Translocates lipid A-core from the inner to the outer leaflet of the inner membrane. Transmembrane domains (TMD) form a pore in the inner membrane and the ATP-binding domain (NBD) is responsible for energy generation. The sequence is that of ATP-dependent lipid A-core flippase from Thiobacillus denitrificans (strain ATCC 25259 / T1).